The sequence spans 349 residues: Heme A synthase (349 aa).

5 helical membrane passes run 15-35 (AVQV…VVGG), 101-121 (LLGR…ALTG), 132-152 (FGLF…VASG), 162-182 (YRLA…VAVA), and 203-223 (VLVG…GLDA). H265 lines the heme pocket. 3 consecutive transmembrane segments (helical) span residues 268 to 288 (IAYL…RLGG), 296 to 316 (LVFA…VHMV), and 317 to 337 (PLDL…AAMI). H324 serves as a coordination point for heme.

Belongs to the COX15/CtaA family. Type 2 subfamily. Interacts with CtaB. The cofactor is heme b.

It is found in the cell membrane. The enzyme catalyses Fe(II)-heme o + 2 A + H2O = Fe(II)-heme a + 2 AH2. It participates in porphyrin-containing compound metabolism; heme A biosynthesis; heme A from heme O: step 1/1. In terms of biological role, catalyzes the conversion of heme O to heme A by two successive hydroxylations of the methyl group at C8. The first hydroxylation forms heme I, the second hydroxylation results in an unstable dihydroxymethyl group, which spontaneously dehydrates, resulting in the formyl group of heme A. This chain is Heme A synthase, found in Azorhizobium caulinodans (strain ATCC 43989 / DSM 5975 / JCM 20966 / LMG 6465 / NBRC 14845 / NCIMB 13405 / ORS 571).